A 449-amino-acid polypeptide reads, in one-letter code: Required for meiotic nuclear division protein 1 homolog (449 aa).

Residues 1–16 (MPATLLRAVAGSHRVL) constitute a mitochondrion transit peptide.

This sequence belongs to the RMD1/sif2 family. Homooligomer.

The protein localises to the mitochondrion. Its function is as follows. Required for mitochondrial translation, possibly by coordinating the assembly or maintenance of the mitochondrial ribosome. The polypeptide is Required for meiotic nuclear division protein 1 homolog (RMND1) (Pongo abelii (Sumatran orangutan)).